We begin with the raw amino-acid sequence, 298 residues long: Acetyl-coenzyme A carboxylase carboxyl transferase subunit beta 1 (298 aa).

Positions 26 to 294 (MWVKCPSCGD…RAADVQNAPA (269 aa)) constitute a CoA carboxyltransferase N-terminal domain. The Zn(2+) site is built by C30, C33, C49, and C51. Residues 30 to 51 (CPSCGDLIYTRQFSDNLKVCKC) form a C4-type zinc finger.

Belongs to the AccD/PCCB family. As to quaternary structure, acetyl-CoA carboxylase is a heterohexamer composed of biotin carboxyl carrier protein (AccB), biotin carboxylase (AccC) and two subunits each of ACCase subunit alpha (AccA) and ACCase subunit beta (AccD). It depends on Zn(2+) as a cofactor.

Its subcellular location is the cytoplasm. The catalysed reaction is N(6)-carboxybiotinyl-L-lysyl-[protein] + acetyl-CoA = N(6)-biotinyl-L-lysyl-[protein] + malonyl-CoA. It participates in lipid metabolism; malonyl-CoA biosynthesis; malonyl-CoA from acetyl-CoA: step 1/1. Its function is as follows. Component of the acetyl coenzyme A carboxylase (ACC) complex. Biotin carboxylase (BC) catalyzes the carboxylation of biotin on its carrier protein (BCCP) and then the CO(2) group is transferred by the transcarboxylase to acetyl-CoA to form malonyl-CoA. This is Acetyl-coenzyme A carboxylase carboxyl transferase subunit beta 1 from Roseiflexus castenholzii (strain DSM 13941 / HLO8).